The sequence spans 142 residues: Small ribosomal subunit protein uS12 (142 aa).

Belongs to the universal ribosomal protein uS12 family.

The chain is Small ribosomal subunit protein uS12 from Tetrahymena thermophila.